The following is a 616-amino-acid chain: Dihydroxy-acid dehydratase (616 aa).

D81 contributes to the Mg(2+) binding site. C122 is a binding site for [2Fe-2S] cluster. The Mg(2+) site is built by D123 and K124. K124 carries the post-translational modification N6-carboxylysine. C196 contributes to the [2Fe-2S] cluster binding site. E496 lines the Mg(2+) pocket. S522 functions as the Proton acceptor in the catalytic mechanism.

This sequence belongs to the IlvD/Edd family. As to quaternary structure, homodimer. The cofactor is [2Fe-2S] cluster. Mg(2+) serves as cofactor.

The enzyme catalyses (2R)-2,3-dihydroxy-3-methylbutanoate = 3-methyl-2-oxobutanoate + H2O. It carries out the reaction (2R,3R)-2,3-dihydroxy-3-methylpentanoate = (S)-3-methyl-2-oxopentanoate + H2O. The protein operates within amino-acid biosynthesis; L-isoleucine biosynthesis; L-isoleucine from 2-oxobutanoate: step 3/4. It participates in amino-acid biosynthesis; L-valine biosynthesis; L-valine from pyruvate: step 3/4. Functionally, functions in the biosynthesis of branched-chain amino acids. Catalyzes the dehydration of (2R,3R)-2,3-dihydroxy-3-methylpentanoate (2,3-dihydroxy-3-methylvalerate) into 2-oxo-3-methylpentanoate (2-oxo-3-methylvalerate) and of (2R)-2,3-dihydroxy-3-methylbutanoate (2,3-dihydroxyisovalerate) into 2-oxo-3-methylbutanoate (2-oxoisovalerate), the penultimate precursor to L-isoleucine and L-valine, respectively. The protein is Dihydroxy-acid dehydratase of Streptomyces griseus subsp. griseus (strain JCM 4626 / CBS 651.72 / NBRC 13350 / KCC S-0626 / ISP 5235).